Here is a 635-residue protein sequence, read N- to C-terminus: Cationic amino acid transporter 4 (635 aa).

3 consecutive transmembrane segments (helical) span residues 42-62 (LTLL…TGAV), 66-86 (VAGP…LLAA), and 113-133 (LWAF…GAAV). N151 and N195 each carry an N-linked (GlcNAc...) asparagine glycan. A helical transmembrane segment spans residues 197–217 (TFSAISLLVILFIVILGFILA). The N-linked (GlcNAc...) asparagine glycan is linked to N221. A run of 5 helical transmembrane segments spans residues 229–249 (FAPF…YAFV), 270–290 (LAIA…STVL), 318–338 (GFIV…SLLF), 365–385 (QVPV…ALLL), and 391–411 (VQFL…SIIV). S422 and S427 each carry phosphoserine. The helical transmembrane segment at 478–498 (VTWALGVMLASAITIGCVLVF) threads the bilayer. N500 carries an N-linked (GlcNAc...) asparagine glycan. 3 consecutive transmembrane segments (helical) span residues 508-528 (WGYI…LLVL), 539-559 (LFQI…NICL), and 567-587 (TWVR…GYGI). The N-linked (GlcNAc...) asparagine glycan is linked to N601.

Belongs to the amino acid-polyamine-organocation (APC) superfamily. Cationic amino acid transporter (CAT) (TC 2.A.3.3) family.

The protein resides in the membrane. In terms of biological role, involved in the transport of the cationic amino acids (arginine, lysine and ornithine). The polypeptide is Cationic amino acid transporter 4 (SLC7A4) (Homo sapiens (Human)).